The sequence spans 177 residues: Large ribosomal subunit protein uL5 (177 aa).

This sequence belongs to the universal ribosomal protein uL5 family. Part of the 50S ribosomal subunit; part of the 5S rRNA/L5/L18/L25 subcomplex. Contacts the 5S rRNA and the P site tRNA. Forms a bridge to the 30S subunit in the 70S ribosome.

In terms of biological role, this is one of the proteins that bind and probably mediate the attachment of the 5S RNA into the large ribosomal subunit, where it forms part of the central protuberance. In the 70S ribosome it contacts protein S13 of the 30S subunit (bridge B1b), connecting the 2 subunits; this bridge is implicated in subunit movement. Contacts the P site tRNA; the 5S rRNA and some of its associated proteins might help stabilize positioning of ribosome-bound tRNAs. The polypeptide is Large ribosomal subunit protein uL5 (Ehrlichia canis (strain Jake)).